Here is a 569-residue protein sequence, read N- to C-terminus: Sulfite reductase [NADPH] hemoprotein beta-component (569 aa).

4 residues coordinate [4Fe-4S] cluster: cysteine 433, cysteine 439, cysteine 478, and cysteine 482. Position 482 (cysteine 482) interacts with siroheme.

It belongs to the nitrite and sulfite reductase 4Fe-4S domain family. Alpha(8)-beta(8). The alpha component is a flavoprotein, the beta component is a hemoprotein. Requires siroheme as cofactor. It depends on [4Fe-4S] cluster as a cofactor.

It carries out the reaction hydrogen sulfide + 3 NADP(+) + 3 H2O = sulfite + 3 NADPH + 4 H(+). Its pathway is sulfur metabolism; hydrogen sulfide biosynthesis; hydrogen sulfide from sulfite (NADPH route): step 1/1. Component of the sulfite reductase complex that catalyzes the 6-electron reduction of sulfite to sulfide. This is one of several activities required for the biosynthesis of L-cysteine from sulfate. The protein is Sulfite reductase [NADPH] hemoprotein beta-component of Buchnera aphidicola subsp. Acyrthosiphon pisum (strain 5A).